The sequence spans 102 residues: NADH-quinone oxidoreductase subunit K (102 aa).

3 helical membrane passes run L6–V26, I30–V50, and V62–L82.

The protein belongs to the complex I subunit 4L family. In terms of assembly, NDH-1 is composed of 13 different subunits. Subunits NuoA, H, J, K, L, M, N constitute the membrane sector of the complex.

It localises to the cell inner membrane. It carries out the reaction a quinone + NADH + 5 H(+)(in) = a quinol + NAD(+) + 4 H(+)(out). NDH-1 shuttles electrons from NADH, via FMN and iron-sulfur (Fe-S) centers, to quinones in the respiratory chain. The immediate electron acceptor for the enzyme in this species is believed to be ubiquinone. Couples the redox reaction to proton translocation (for every two electrons transferred, four hydrogen ions are translocated across the cytoplasmic membrane), and thus conserves the redox energy in a proton gradient. In Pseudomonas syringae pv. tomato (strain ATCC BAA-871 / DC3000), this protein is NADH-quinone oxidoreductase subunit K.